The sequence spans 318 residues: L-carnitine dehydrogenase (318 aa).

An NAD(+)-binding site is contributed by G14–G19.

Belongs to the 3-hydroxyacyl-CoA dehydrogenase family. L-carnitine dehydrogenase subfamily. As to quaternary structure, homodimer.

It is found in the cytoplasm. The catalysed reaction is carnitine + NAD(+) = 3-dehydrocarnitine + NADH + H(+). Its pathway is amine and polyamine metabolism; carnitine metabolism. In terms of biological role, catalyzes the NAD(+)-dependent oxidation of L-carnitine to 3-dehydrocarnitine. This is L-carnitine dehydrogenase from Pseudomonas syringae pv. syringae (strain B728a).